Reading from the N-terminus, the 99-residue chain is IEVLLGGGDGSLAFVPNDFSIAKGEKIVFKNNAGFPHNVVFDEDEIPSGVDASKISMDENDLLNAAGETYEVALTEAGTYSFYCAPHQGAGMVGKVTVN.

The 99-residue stretch at 1-99 (IEVLLGGGDG…AGMVGKVTVN (99 aa)) folds into the Plastocyanin-like domain. Residues histidine 37, cysteine 84, histidine 87, and methionine 92 each coordinate Cu cation.

This sequence belongs to the plastocyanin family. Cu(2+) serves as cofactor.

Its subcellular location is the plastid. The protein resides in the chloroplast thylakoid membrane. Participates in electron transfer between P700 and the cytochrome b6-f complex in photosystem I. This is Plastocyanin (PETE) from Capsella bursa-pastoris (Shepherd's purse).